Consider the following 744-residue polypeptide: Protein zyg-11 homolog B (744 aa).

LRR repeat units follow at residues 185 to 208 (LPRL…LACK), 216 to 236 (MHHL…VREL), and 237 to 261 (KHLN…LLEQ).

The protein belongs to the zyg-11 family. In terms of assembly, (Microbial infection) Interacts with SARS-COV-2 protein ORF10. Interacts with ELOC/Elongin C. Part of an E3 ubiquitin ligase complex including ZYG11B, CUL2 and Elongin BC. In terms of processing, (Microbial infection) Ubiquitinated; leading to proteasomal degradation in the presence of herpes simplex virus 1/HHV-1.

It localises to the cytoplasm. Functionally, serves as substrate adapter subunit in the E3 ubiquitin ligase complex ZYG11B-CUL2-Elongin BC. Acts to target substrates bearing N-terminal degrons for proteasomal degradation with the first four residues of substrates being the key recognition elements. Prefers Nt-Gly but also has the capacity to recognize Nt-Ser, -Ala and -Cys. Involved in the clearance of proteolytic fragments generated by caspase cleavage during apoptosis since N-terminal glycine degrons are strongly enriched at caspase cleavage sites. Also important in the quality control of protein N-myristoylation in which N-terminal glycine degrons are conditionally exposed after a failure of N-myristoylation. In addition, plays a role in the amplification of cGAS to enhance innate immune response. Mechanistically, strengthens the processes of cGAS binding with dsDNA and assembling oligomers and also accelerates and stabilizes cGAS-DNA condensation, thereby enhancing production of antiviral IFNs and inflammatory cytokines. This is Protein zyg-11 homolog B from Homo sapiens (Human).